The following is a 189-amino-acid chain: ComE operon protein 2 (189 aa).

Residues Ser5–Ala132 form the CMP/dCMP-type deaminase domain. A Zn(2+)-binding site is contributed by His70. Glu72 (proton donor) is an active-site residue. Residues Cys98 and Cys101 each contribute to the Zn(2+) site.

It belongs to the cytidine and deoxycytidylate deaminase family. Zn(2+) is required as a cofactor.

In terms of biological role, dispensable for transformability. The sequence is that of ComE operon protein 2 (comEB) from Bacillus subtilis (strain 168).